The chain runs to 442 residues: 6-phospho-alpha-glucosidase 1 (442 aa).

6–72 (FSVLIAGGGS…PEVEFLATTD (67 aa)) contributes to the NAD(+) binding site. Arg95 and Asn149 together coordinate substrate. Residue Cys171 participates in Mn(2+) binding. Asp172 (proton donor) is an active-site residue. Residue His202 coordinates Mn(2+). Tyr265 acts as the Proton acceptor in catalysis. A substrate-binding site is contributed by Arg285.

The protein belongs to the glycosyl hydrolase 4 family. In terms of assembly, homodimer. May also form homotetramer. Mn(2+) serves as cofactor. Co(2+) is required as a cofactor. Requires Ni(2+) as cofactor. It depends on Fe(2+) as a cofactor. The cofactor is Mg(2+). NAD(+) serves as cofactor.

It catalyses the reaction alpha-maltose 6'-phosphate + H2O = D-glucose 6-phosphate + D-glucose. Is inhibited by EDTA in vitro. In terms of biological role, is probably involved in the catabolism of alpha-glycosides accumulated via a phosphoenolpyruvate-dependent phosphotransferase system (PEP-PTS). Hydrolyzes a wide variety of 6-phospho-alpha-D-glucosides including the five isomeric derivatives of sucrose, i.e. trehalulose-6'-phosphate, turanose-6'-phosphate, maltulose-6'-phosphate, leucrose-6'-phosphate, and palatinose-6'-phosphate, but is not active on sucrose-6-phosphate. Can also hydrolyze maltose-6'-phosphate and methyl-alpha-glucose-6-phosphate, and poorly, trehalose-6-phosphate. Fails to hydrolyze beta-O-linked phosphorylated disaccharides such as cellobiose-6'-phosphate and gentiobiose-6'-phosphate. Does not seem to be involved in maltose catabolism. The sequence is that of 6-phospho-alpha-glucosidase 1 (simA) from Lacticaseibacillus paracasei (strain ATCC 334 / BCRC 17002 / CCUG 31169 / CIP 107868 / KCTC 3260 / NRRL B-441) (Lactobacillus paracasei).